The chain runs to 73 residues: Protein SlyX homolog (73 aa).

The segment at 54 to 73 (LQQAESNAPAAPANERPPHY) is disordered. Low complexity predominate over residues 57 to 67 (AESNAPAAPAN).

The protein belongs to the SlyX family.

The chain is Protein SlyX homolog from Rhodopseudomonas palustris (strain BisA53).